A 575-amino-acid chain; its full sequence is Arginine--tRNA ligase (575 aa).

Positions 136–146 match the 'HIGH' region motif; it reads ANPTGPLHVGH.

It belongs to the class-I aminoacyl-tRNA synthetase family. In terms of assembly, monomer.

The protein resides in the cytoplasm. The catalysed reaction is tRNA(Arg) + L-arginine + ATP = L-arginyl-tRNA(Arg) + AMP + diphosphate. The protein is Arginine--tRNA ligase of Polynucleobacter necessarius subsp. necessarius (strain STIR1).